A 194-amino-acid chain; its full sequence is Small ribosomal subunit protein uS7 (194 aa).

It belongs to the universal ribosomal protein uS7 family. Part of the 30S ribosomal subunit.

Functionally, one of the primary rRNA binding proteins, it binds directly to 16S rRNA where it nucleates assembly of the head domain of the 30S subunit. Is located at the subunit interface close to the decoding center. The polypeptide is Small ribosomal subunit protein uS7 (Archaeoglobus fulgidus (strain ATCC 49558 / DSM 4304 / JCM 9628 / NBRC 100126 / VC-16)).